The chain runs to 437 residues: Serine carboxypeptidase-like 17 (437 aa).

A signal peptide spans 1–26; that stretch reads MGKECYYLSWILKFHLLLVLIQLVDS. Disulfide bonds link Cys-85-Cys-327, Cys-249-Cys-263, and Cys-287-Cys-293. A glycan (N-linked (GlcNAc...) asparagine) is linked at Asn-106. The active site involves Ser-181. Asp-362 is an active-site residue. N-linked (GlcNAc...) asparagine glycosylation is present at Asn-378. His-415 is an active-site residue.

It belongs to the peptidase S10 family. Expressed in seedlings and siliques.

Its subcellular location is the secreted. In terms of biological role, probable carboxypeptidase. The protein is Serine carboxypeptidase-like 17 (SCPL17) of Arabidopsis thaliana (Mouse-ear cress).